Reading from the N-terminus, the 713-residue chain is TWiK family of potassium channels protein 12 (713 aa).

The Cytoplasmic segment spans residues 1 to 15 (MTLFKKIQWFCNLIR). Residues 16–36 (LRSYYKFLLLIAYTAFGAWLF) traverse the membrane as a helical segment. N-linked (GlcNAc...) asparagine glycans are attached at residues Asn-53, Asn-77, and Asn-98. The pore-forming intramembrane region spans 112 to 132 (WTWTGAMFYAGQLYTTIGYGY). The chain crosses the membrane as a helical span at residues 142–162 (ICTIFYALFGIPCFLMYLKIE). Over 163-242 (NAIEWKKDKQ…AEERKKKPFP (80 aa)) the chain is Cytoplasmic. Residues 243–263 (IPIAIIMLIIWICFSASMFCI) traverse the membrane as a helical segment. Residues 267–287 (TWVFSSAVYFFIVSISTVGLG) constitute an intramembrane region (pore-forming). Residues 298–318 (VFNFLLILVGLALLSMCFELI) traverse the membrane as a helical segment. Residues 319–713 (TDRVAKWKQK…LSKRDASTMA (395 aa)) lie on the Cytoplasmic side of the membrane.

It belongs to the two pore domain potassium channel (TC 1.A.1.8) family.

It localises to the membrane. The protein is TWiK family of potassium channels protein 12 (twk-12) of Caenorhabditis elegans.